The following is a 375-amino-acid chain: Sperm microtubule associated protein 2 (375 aa).

Residues 1-78 (MGELGEHRAS…MAGEELPETS (78 aa)) are disordered. Residues 59–75 (EPEEEIPPEEMAGEELP) show a composition bias toward acidic residues. 7 THEG repeats span residues 110 to 129 (AKGR…PKTN), 176 to 195 (TITV…PKRF), 214 to 233 (STLE…PKVR), 250 to 269 (AAQM…PRPP), 282 to 301 (PKPY…PKAL), 318 to 337 (VTKN…PKIR), and 352 to 371 (ASLV…PKYI). Residue serine 287 is modified to Phosphoserine.

Interacts with CCT5. Testis specific (at protein level). Specifically expressed in spermatids; Sertoli cells maintain the level of expression in spermatids. If isolated spermatids are cultivated for 16 hours alone, the expression of THEG is down-regulated. May require signals from Sertoli cells to initiate changes in its gene expression through spermatogenesis.

The protein localises to the nucleus. Its function is as follows. May be involved (but not essential) in spermatogenesis. This chain is Sperm microtubule associated protein 2, found in Mus musculus (Mouse).